A 60-amino-acid chain; its full sequence is Mastoparan-VB1 (60 aa).

An N-terminal signal peptide occupies residues 1–23; that stretch reads MKNTILLLFTAFIFLSGFFGMSA. A propeptide spanning residues 24-45 is cleaved from the precursor; it reads EALADPKADPLAGPFPDADPDP. 4 AXPX repeats span residues 27 to 30, 31 to 34, 35 to 38, and 40 to 43; these read ADPK, ADPL, AGPF, and DADP. Leu59 carries the leucine amide modification.

As to expression, expressed by the venom gland.

The protein resides in the secreted. Its subcellular location is the target cell membrane. Functionally, antimicrobial peptide. Shows activity against both Gram-positive (S.aureus MIC=1.9-3.75 ug/ml) and -negative (E.coli MIC=15-60 ug/ml) bacteria, as well against fungi (C.albicans MIC=15 ug/ml). Also promotes moderate mast cell degranulation. Does not show hemolytic activity on rabbit and human erythrocytes. Its mast cell degranulation activity may be related to the activation of G-protein coupled receptors in mast cells as well as interaction with other proteins located in cell endosomal membranes in the mast cells. This is Mastoparan-VB1 from Vespa bicolor (Black shield wasp).